Consider the following 401-residue polypeptide: Glutamyl-tRNA reductase (401 aa).

Residues 45–48, Ser101, 106–108, and Gln112 each bind substrate; these read TCNR and EDQ. Cys46 acts as the Nucleophile in catalysis. 177–182 lines the NADP(+) pocket; that stretch reads GYGEVG.

Belongs to the glutamyl-tRNA reductase family. Homodimer.

The catalysed reaction is (S)-4-amino-5-oxopentanoate + tRNA(Glu) + NADP(+) = L-glutamyl-tRNA(Glu) + NADPH + H(+). It participates in porphyrin-containing compound metabolism; protoporphyrin-IX biosynthesis; 5-aminolevulinate from L-glutamyl-tRNA(Glu): step 1/2. Catalyzes the NADPH-dependent reduction of glutamyl-tRNA(Glu) to glutamate 1-semialdehyde (GSA). The sequence is that of Glutamyl-tRNA reductase from Clostridium beijerinckii (strain ATCC 51743 / NCIMB 8052) (Clostridium acetobutylicum).